The chain runs to 540 residues: Membrane protein insertase YidC (540 aa).

5 consecutive transmembrane segments (helical) span residues 1 to 21 (MVVQNNFLFIAFIFVTFMMLD), 351 to 371 (NWGISIIIITFMVRGIMFPLT), 418 to 438 (LGGCMPLIIQMPIFLALYYML), 464 to 484 (ILPIIMGITMFLIQKISPSSI), and 497 to 517 (PLIFTIFFLWFPSGLVLYYII).

Belongs to the OXA1/ALB3/YidC family. Type 1 subfamily. In terms of assembly, interacts with the Sec translocase complex via SecD. Specifically interacts with transmembrane segments of nascent integral membrane proteins during membrane integration.

Its subcellular location is the cell membrane. In terms of biological role, required for the insertion and/or proper folding and/or complex formation of integral membrane proteins into the membrane. Involved in integration of membrane proteins that insert both dependently and independently of the Sec translocase complex, as well as at least some lipoproteins. Aids folding of multispanning membrane proteins. This is Membrane protein insertase YidC from Wigglesworthia glossinidia brevipalpis.